We begin with the raw amino-acid sequence, 1600 residues long: THO complex subunit 2 (1600 aa).

Positions 1–163 (MAAAAVVVPA…KLFYKQQKFN (163 aa)) are anchor domain; interaction with THOC5 and THOC7. Residues 164 to 534 (LLREENEGYA…GQWKNETYNS (371 aa)) are bow domain; interaction with THOC1 dock domain and THOC3. Positions 293 to 339 (NCIMDEHKREIAEAKQIVRKLTMVVLSSEKMDDREKEKEKEEEKVEK) form a coiled coil. A disordered region spans residues 321–341 (EKMDDREKEKEKEEEKVEKPP). The tract at residues 535–686 (HPLLVKVKAQ…LILKEVVQKM (152 aa)) is MIF4G domain; interaction with THOC3 and DDX39B. A stern domain region spans residues 687-1174 (AGIEITEEMT…LAMGYSGQLK (488 aa)). Residues 896–965 (HTSYEREVNK…LKLEKDNWLL (70 aa)) adopt a coiled-coil conformation. A Nuclear localization signal motif is present at residues 923 to 928 (KKKKEK). Residues 1175-1597 (SRKSYMIPEN…FHLDVFSQYN (423 aa)) are charged domain. The disordered stretch occupies residues 1184–1600 (NEFHHKDPSP…DVFSQYNGKL (417 aa)). Residues 1208–1217 (PSPSSTGSTS) are compositionally biased toward low complexity. Over residues 1218–1234 (KSDESSAEETDKSRERS) the composition is skewed to basic and acidic residues. Serine 1222 is subject to Phosphoserine. A compositionally biased stretch (low complexity) spans 1251-1263 (GNSSNGNSGSNSN). Composition is skewed to basic and acidic residues over residues 1265–1285 (AVKE…KEKT), 1294–1343 (ILGK…EKFK), and 1353–1383 (SSQE…KGGE). At threonine 1385 the chain carries Phosphothreonine. Residues serine 1390, serine 1393, and serine 1417 each carry the phosphoserine modification. Over residues 1416–1425 (PSPSHSSTVK) the composition is skewed to polar residues. Threonine 1443 bears the Phosphothreonine mark. Residues 1449–1504 (KSKEREMDKKDLDKSRERSREREKKDEKDRKERKRDHSNSDREVPPDLTKRRKEEN) are compositionally biased toward basic and acidic residues. Phosphoserine occurs at positions 1450, 1486, and 1516. Residues 1464–1491 (RERSREREKKDEKDRKERKRDHSNSDRE) adopt a coiled-coil conformation. The segment covering 1524–1585 (NEKDKEKNKS…SSGGKEEKKQ (62 aa)) has biased composition (basic and acidic residues).

This sequence belongs to the THOC2 family. In terms of assembly, component of the THO subcomplex, which is composed of THOC1, THOC2, THOC3, THOC5, THOC6 and THOC7. The THO subcomplex interacts with DDX39B to form the THO-DDX39B complex which multimerizes into a 28-subunit tetrameric assembly. Component of the transcription/export (TREX) complex at least composed of ALYREF/THOC4, DDX39B, SARNP/CIP29, CHTOP and the THO subcomplex; in the complex interacts with THOC1, THOC3, THOC5, THOC7 and DDX39B. TREX seems to have a dynamic structure involving ATP-dependent remodeling. Interacts with POLDIP3 and ZC3H11A.

It is found in the nucleus. Its subcellular location is the nucleus speckle. The protein resides in the cytoplasm. Its function is as follows. Component of the THO subcomplex of the TREX complex which is thought to couple mRNA transcription, processing and nuclear export, and which specifically associates with spliced mRNA and not with unspliced pre-mRNA. Required for efficient export of polyadenylated RNA and spliced mRNA. The THOC1-THOC2-THOC3 core complex alone is sufficient to bind export factor NXF1-NXT1 and promote ATPase activity of DDX39B; in the complex THOC2 is the only component that directly interacts with DDX39B. TREX is recruited to spliced mRNAs by a transcription-independent mechanism, binds to mRNA upstream of the exon-junction complex (EJC) and is recruited in a splicing- and cap-dependent manner to a region near the 5' end of the mRNA where it functions in mRNA export to the cytoplasm via the TAP/NXF1 pathway. Required for NXF1 localization to the nuclear rim. THOC2 (and probably the THO complex) is involved in releasing mRNA from nuclear speckle domains. Plays a role for proper neuronal development. The sequence is that of THO complex subunit 2 (THOC2) from Plecturocebus moloch (Dusky titi monkey).